The following is a 43-amino-acid chain: Protein PsbN (43 aa).

A helical membrane pass occupies residues 5–27; it reads TLVAIFISCSLVSFTGYALYTAF.

This sequence belongs to the PsbN family.

The protein localises to the plastid. It localises to the chloroplast thylakoid membrane. In terms of biological role, may play a role in photosystem I and II biogenesis. This is Protein PsbN from Exsertotheca crispa (Moss).